The primary structure comprises 202 residues: Protein N-terminal glutamine amidohydrolase (202 aa).

Residues C27, H80, and D96 contribute to the active site.

This sequence belongs to the NTAQ1 family. As to quaternary structure, monomer.

It localises to the cytoplasm. The protein resides in the cytosol. Its subcellular location is the nucleus. It carries out the reaction N-terminal L-glutaminyl-[protein] + H2O = N-terminal L-glutamyl-[protein] + NH4(+). Its function is as follows. Mediates the side-chain deamidation of N-terminal glutamine residues to glutamate, an important step in N-end rule pathway of protein degradation. Conversion of the resulting N-terminal glutamine to glutamate renders the protein susceptible to arginylation, polyubiquitination and degradation as specified by the N-end rule. Does not act on substrates with internal or C-terminal glutamine and does not act on non-glutamine residues in any position. Does not deaminate acetylated N-terminal glutamine. With the exception of proline, all tested second-position residues on substrate peptides do not greatly influence the activity. In contrast, a proline at position 2, virtually abolishes deamidation of N-terminal glutamine. The chain is Protein N-terminal glutamine amidohydrolase (ntaq1) from Danio rerio (Zebrafish).